A 124-amino-acid chain; its full sequence is Large ribosomal subunit protein bL19 (124 aa).

The protein belongs to the bacterial ribosomal protein bL19 family.

Functionally, this protein is located at the 30S-50S ribosomal subunit interface and may play a role in the structure and function of the aminoacyl-tRNA binding site. The sequence is that of Large ribosomal subunit protein bL19 from Cereibacter sphaeroides (strain ATCC 17029 / ATH 2.4.9) (Rhodobacter sphaeroides).